A 95-amino-acid polypeptide reads, in one-letter code: Aspartyl/glutamyl-tRNA(Asn/Gln) amidotransferase subunit C (95 aa).

The protein belongs to the GatC family. In terms of assembly, heterotrimer of A, B and C subunits.

It catalyses the reaction L-glutamyl-tRNA(Gln) + L-glutamine + ATP + H2O = L-glutaminyl-tRNA(Gln) + L-glutamate + ADP + phosphate + H(+). The catalysed reaction is L-aspartyl-tRNA(Asn) + L-glutamine + ATP + H2O = L-asparaginyl-tRNA(Asn) + L-glutamate + ADP + phosphate + 2 H(+). Allows the formation of correctly charged Asn-tRNA(Asn) or Gln-tRNA(Gln) through the transamidation of misacylated Asp-tRNA(Asn) or Glu-tRNA(Gln) in organisms which lack either or both of asparaginyl-tRNA or glutaminyl-tRNA synthetases. The reaction takes place in the presence of glutamine and ATP through an activated phospho-Asp-tRNA(Asn) or phospho-Glu-tRNA(Gln). This Nitrobacter hamburgensis (strain DSM 10229 / NCIMB 13809 / X14) protein is Aspartyl/glutamyl-tRNA(Asn/Gln) amidotransferase subunit C.